A 481-amino-acid polypeptide reads, in one-letter code: ATP synthase subunit beta (481 aa).

160-167 (GGAGVGKT) lines the ATP pocket.

Belongs to the ATPase alpha/beta chains family. In terms of assembly, F-type ATPases have 2 components, CF(1) - the catalytic core - and CF(0) - the membrane proton channel. CF(1) has five subunits: alpha(3), beta(3), gamma(1), delta(1), epsilon(1). CF(0) has three main subunits: a(1), b(2) and c(9-12). The alpha and beta chains form an alternating ring which encloses part of the gamma chain. CF(1) is attached to CF(0) by a central stalk formed by the gamma and epsilon chains, while a peripheral stalk is formed by the delta and b chains.

The protein localises to the cell inner membrane. It catalyses the reaction ATP + H2O + 4 H(+)(in) = ADP + phosphate + 5 H(+)(out). Its function is as follows. Produces ATP from ADP in the presence of a proton gradient across the membrane. The catalytic sites are hosted primarily by the beta subunits. The protein is ATP synthase subunit beta of Myxococcus xanthus (strain DK1622).